A 466-amino-acid polypeptide reads, in one-letter code: Probable multidrug resistance protein NorM (466 aa).

Helical transmembrane passes span 68 to 90 (AHTVYFVSFTFGLGLMAAVSPLV), 110 to 132 (LWVALLISLPMMASPLYGEHILI), 142 to 164 (ALAQRYLNGLAWGIAPALGFIAL), 177 to 199 (PLWITVAAIPVNAALVYVLIHGL), 209 to 231 (GAGLATTLVNLGTFLAVLAIAAW), 251 to 273 (LVRQLIALGAPISSSLLLEYGLF), 288 to 310 (LAAHQIALQVTAVLFMVPLGIGM), 331 to 353 (AGLVAAVLGVALVSALTVAIILG), 368 to 387 (SAATVELTATLLLVGATFFI), 407 to 429 (MTLAFAAIGYWCVAFPVAWVLAF), and 433 to 455 (LGAVGVWIGFSIGTFVYAGLLVL).

This sequence belongs to the multi antimicrobial extrusion (MATE) (TC 2.A.66.1) family.

The protein localises to the cell inner membrane. Its function is as follows. Multidrug efflux pump. The sequence is that of Probable multidrug resistance protein NorM (norM) from Bradyrhizobium diazoefficiens (strain JCM 10833 / BCRC 13528 / IAM 13628 / NBRC 14792 / USDA 110).